A 160-amino-acid chain; its full sequence is Major strawberry allergen Fra a 1-2 (160 aa).

This sequence belongs to the BetVI family. As to quaternary structure, monomer. Interacts with AP. Highly expressed in ripe red fruits. Expressed in roots and white fruits. Expressed at low levels in open flowers.

Functionally, involved in the control of flavonoid biosynthesis in fruits, probably by binding directly to natural flavonoids. Binds the natural flavonoid myricetin with affinities in the low micromolar range. This is Major strawberry allergen Fra a 1-2 from Fragaria ananassa (Strawberry).